The following is a 361-amino-acid chain: Putative agmatine deiminase (361 aa).

The active-site Amidino-cysteine intermediate is the Cys-354.

This sequence belongs to the agmatine deiminase family.

It catalyses the reaction agmatine + H2O = N-carbamoylputrescine + NH4(+). The sequence is that of Putative agmatine deiminase from Streptococcus pneumoniae (strain ATCC BAA-255 / R6).